A 250-amino-acid chain; its full sequence is Green-light absorbing proteorhodopsin (250 aa).

Positions 1-18 (MGKLLLILGSVIALPTFA) are cleaved as a signal peptide. At 19–29 (AGGGDLDASDY) the chain is on the extracellular side. A helical membrane pass occupies residues 30 to 53 (TGVSFWLVTAALLASTVFFFVERD). Residues 54-58 (RVSAK) are Cytoplasmic-facing. The helical transmembrane segment at 59–87 (WKTSLTVSGLVTGIAFWHYMYMRGVWIET) threads the bilayer. Topologically, residues 88–90 (GDS) are extracellular. Residues 91–118 (PTVFRYIDWLLTVPLLICEFYLILAAAT) traverse the membrane as a helical segment. The Cytoplasmic portion of the chain corresponds to 119-121 (NVA). Residues 122–144 (GSLFKKLLVGSLVMLVFGYMGEA) form a helical membrane-spanning segment. The Extracellular segment spans residues 145–147 (GIM). The chain crosses the membrane as a helical span at residues 148-177 (AAWPAFIIGCLAWVYMIYELWAGEGKSACN). The Cytoplasmic portion of the chain corresponds to 178-180 (TAS). A helical transmembrane segment spans residues 181 to 208 (PAVQSAYNTMMYIIIFGWAIYPVGYFTG). Residues 209-218 (YLMGDGGSAL) lie on the Extracellular side of the membrane. Residues 219 to 249 (NLNLIYNLADFVNKILFGLIIWNVAVKESSN) form a helical membrane-spanning segment. Residue lysine 232 is modified to N6-(retinylidene)lysine. Position 250 (alanine 250) is a topological domain, cytoplasmic.

The protein belongs to the archaeal/bacterial/fungal opsin family. Homopentamer. GPR protomers assemble into a pentamer around a central pore with a C5 symmetry axis. In terms of processing, contains one covalently linked retinal chromophore per subunit.

It is found in the cell membrane. Its function is as follows. Light-driven proton pump. The sequence is that of Green-light absorbing proteorhodopsin from Unknown prokaryotic organism.